A 252-amino-acid chain; its full sequence is Imidazole glycerol phosphate synthase subunit HisF (252 aa).

Catalysis depends on residues aspartate 11 and aspartate 130.

The protein belongs to the HisA/HisF family. In terms of assembly, heterodimer of HisH and HisF.

The protein localises to the cytoplasm. The catalysed reaction is 5-[(5-phospho-1-deoxy-D-ribulos-1-ylimino)methylamino]-1-(5-phospho-beta-D-ribosyl)imidazole-4-carboxamide + L-glutamine = D-erythro-1-(imidazol-4-yl)glycerol 3-phosphate + 5-amino-1-(5-phospho-beta-D-ribosyl)imidazole-4-carboxamide + L-glutamate + H(+). It functions in the pathway amino-acid biosynthesis; L-histidine biosynthesis; L-histidine from 5-phospho-alpha-D-ribose 1-diphosphate: step 5/9. IGPS catalyzes the conversion of PRFAR and glutamine to IGP, AICAR and glutamate. The HisF subunit catalyzes the cyclization activity that produces IGP and AICAR from PRFAR using the ammonia provided by the HisH subunit. The chain is Imidazole glycerol phosphate synthase subunit HisF from Halothermothrix orenii (strain H 168 / OCM 544 / DSM 9562).